A 70-amino-acid chain; its full sequence is Gas vesicle protein A (70 aa).

The protein belongs to the gas vesicle GvpA family. In terms of assembly, the gas vesicle shell is 2 nm thick and consists of a single layer of this protein. It forms helical ribs nearly perpendicular to the long axis of the vesicle.

The protein localises to the gas vesicle shell. Its function is as follows. Gas vesicles are hollow, gas filled proteinaceous nanostructures found in some microorganisms. During planktonic growth they allow positioning of the organism at a favorable depth for light or nutrient acquisition. GvpA forms the protein shell. In Ancylobacter aquaticus, this protein is Gas vesicle protein A.